A 185-amino-acid polypeptide reads, in one-letter code: Ribosome-recycling factor (185 aa).

Belongs to the RRF family.

It is found in the cytoplasm. Responsible for the release of ribosomes from messenger RNA at the termination of protein biosynthesis. May increase the efficiency of translation by recycling ribosomes from one round of translation to another. The sequence is that of Ribosome-recycling factor from Nitrosomonas eutropha (strain DSM 101675 / C91 / Nm57).